Consider the following 1271-residue polypeptide: MPPTSSQAPFHRYSHLDQRSAPDTQESSPADGNHDPRRQSTSFDHPNLYAQRDVFAVPNHPQSTNLNHQPYLHQGRSGSFEEPIYETPQPGHNVGYEDAEPYGHEQHDGTMWSERPSYSAPYDSDIKAPLDPTPYTPDLEADGMVVKEKKVHATEVMATTNARRWWIRITWMMTWWIPSFLLVHLGRMKRADVRMAWREKLAIFMMICLACAVVLFYIIFFGKLLCPDSDKAWNEKELATHQGDDDYYAAIAGKVYDFTNFYKAQHSDLSSYTTSSALMLEFAGQDLTNYFPMPMTVACPNLVTSTDLTLMYSNFTPIVQYAVHTSGPLQTGTDTKLNDINWYTDTLNPALEDYYKGYYVYDKSSIASGADSDSKYWAIYNNKVYDLSNYIYTISYYSSSSGTDLPNYSFLNSDITDLFQTSAGQDITKDMDEKLSALTAEDAANQMTCLNNAFYLGELDFRKTPRCTVQNYLLLAFSIILIATIASKFLAALQLGSKRQPELLDKFVICQVPCYTEGEESLKRTIDSLAALNYDDKRKLIFIICDGNIVGSGNNRPTPRIVLDLLGVDDKLEAEPLLFKSIGEGSKQLNYGKVYSGLYEFEGHVVPYIVVVKVGKPSEISKPGNRGKRDSQVLLMQYLNRVHFDAPMTPLELEIYHQMRNVIGIDPAFYEYIFQVDADTSVTPDSLNRLIACTADDQQIIGICGETKLANENESLTTMIQVYEYYISHHLTKAFESLFGSVTCLPGCFSVYRIRTAEGGRPVIISSVVIDEYAEPNVDTLHKKNLFSLGEDRYLTTLMMKNFPTFKMKFTPDAIAHTVAPSKWSVLLSQRRRWINSTIHNLVELLFLPEMCGFCFFSMRWVVFLDLLGTIILPATCGYLIYLVIVVSTGKAAIPVISLAMIGATYGLQALIFILKREFMLIGWMLVYILAFPVWSVFLPIYSFWSMDDFSWGNTRKVIGEGNQKTVVIDDDEPFNEGMIPYRTFKEYEWNAWEAASLHSESPAPSEKSQRTTRTGQSYRPHPHSIRSPSFHSSASELPSKADYWRDSSPLGMGNESKRLHQVSSDPSMRGDKSFIRGSKPQVERVQSMAGMSMWGSGSVYDPYKQAMGGPGFLHPMMTGNSLASQATFYPPQTQYPMSMYGSPMMMPMGMPMMGLQYAGNASMAGGAAGPRGTMMTMGMGDQSRISSFSMGGPVAESGAGRLVGLSINEEKEVQDEEVLDKLKTWLSKQDLMSVTKRQTREAIYTLFPNAGLQNRAGWLNEQIDKILSES.

Disordered regions lie at residues 1–45 and 58–117; these read MPPT…SFDH and PNHP…ERPS. The segment covering 21–30 has biased composition (polar residues); it reads APDTQESSPA. 2 helical membrane passes run 165-185 and 201-221; these read WWIR…LVHL and LAIF…IIFF. Asn407 carries an N-linked (GlcNAc...) asparagine glycan. A helical transmembrane segment spans residues 473–493; that stretch reads LLLAFSIILIATIASKFLAAL. 2 N-linked (GlcNAc...) asparagine glycosylation sites follow: Asn713 and Asn836. 3 consecutive transmembrane segments (helical) span residues 867–887, 894–914, and 919–939; these read LLGT…VIVV, IPVI…LIFI, and FMLI…SVFL. Residues 999–1081 are disordered; sequence HSESPAPSEK…DKSFIRGSKP (83 aa). Positions 1027–1037 are enriched in polar residues; the sequence is RSPSFHSSASE. Residues Asn1055 and Asn1161 are each glycosylated (N-linked (GlcNAc...) asparagine). Residues 1213–1269 enclose the DEK-C domain; that stretch reads EVQDEEVLDKLKTWLSKQDLMSVTKRQTREAIYTLFPNAGLQNRAGWLNEQIDKILS.

It belongs to the chitin synthase family.

The protein resides in the cell membrane. The catalysed reaction is [(1-&gt;4)-N-acetyl-beta-D-glucosaminyl](n) + UDP-N-acetyl-alpha-D-glucosamine = [(1-&gt;4)-N-acetyl-beta-D-glucosaminyl](n+1) + UDP + H(+). Polymerizes chitin, a structural polymer of the cell wall and septum, by transferring the sugar moiety of UDP-GlcNAc to the non-reducing end of the growing chitin polymer. Produces a large proportion of the chitin that is not deacetylated to chitosan. The sequence is that of Chitin synthase 4 from Cryptococcus neoformans var. grubii serotype A (strain H99 / ATCC 208821 / CBS 10515 / FGSC 9487) (Filobasidiella neoformans var. grubii).